Here is a 278-residue protein sequence, read N- to C-terminus: Elongation factor Ts (278 aa).

Positions 79–82 are involved in Mg(2+) ion dislocation from EF-Tu; sequence TDFV.

This sequence belongs to the EF-Ts family.

Its subcellular location is the cytoplasm. Associates with the EF-Tu.GDP complex and induces the exchange of GDP to GTP. It remains bound to the aminoacyl-tRNA.EF-Tu.GTP complex up to the GTP hydrolysis stage on the ribosome. In Borrelia duttonii (strain Ly), this protein is Elongation factor Ts.